Here is a 114-residue protein sequence, read N- to C-terminus: MNSYLLLPMVSLLTCIGQLCQKQAAQCWEQPQARRLNLTLRWLAIAVVSLGLGMLLWLRLLQQLPLSVAYPMLSFNFVLVTLAAQLFYGEKATLRHWLGVAAIMFGILLMSWHL.

3 consecutive transmembrane segments (helical) span residues 38–58, 64–84, and 94–114; these read LTLRWLAIAVVSLGLGMLLWL, LPLSVAYPMLSFNFVLVTLAA, and LRHWLGVAAIMFGILLMSWHL. The region spanning 43-112 is the EamA domain; it reads LAIAVVSLGL…IMFGILLMSW (70 aa).

It belongs to the ArnE family. Heterodimer of ArnE and ArnF.

Its subcellular location is the cell inner membrane. The protein operates within bacterial outer membrane biogenesis; lipopolysaccharide biosynthesis. Its function is as follows. Translocates 4-amino-4-deoxy-L-arabinose-phosphoundecaprenol (alpha-L-Ara4N-phosphoundecaprenol) from the cytoplasmic to the periplasmic side of the inner membrane. The protein is Probable 4-amino-4-deoxy-L-arabinose-phosphoundecaprenol flippase subunit ArnE of Yersinia pseudotuberculosis serotype O:3 (strain YPIII).